We begin with the raw amino-acid sequence, 411 residues long: Imidazolonepropionase (411 aa).

2 residues coordinate Fe(3+): histidine 75 and histidine 77. Zn(2+) is bound by residues histidine 75 and histidine 77. Arginine 84, tyrosine 147, and histidine 180 together coordinate 4-imidazolone-5-propanoate. Tyrosine 147 contributes to the N-formimidoyl-L-glutamate binding site. Histidine 245 contacts Fe(3+). Histidine 245 is a binding site for Zn(2+). Glutamine 248 serves as a coordination point for 4-imidazolone-5-propanoate. Position 320 (aspartate 320) interacts with Fe(3+). Aspartate 320 contacts Zn(2+). The N-formimidoyl-L-glutamate site is built by asparagine 322 and glycine 324. Residue threonine 325 participates in 4-imidazolone-5-propanoate binding.

It belongs to the metallo-dependent hydrolases superfamily. HutI family. The cofactor is Zn(2+). It depends on Fe(3+) as a cofactor.

The protein resides in the cytoplasm. It carries out the reaction 4-imidazolone-5-propanoate + H2O = N-formimidoyl-L-glutamate. The protein operates within amino-acid degradation; L-histidine degradation into L-glutamate; N-formimidoyl-L-glutamate from L-histidine: step 3/3. Catalyzes the hydrolytic cleavage of the carbon-nitrogen bond in imidazolone-5-propanoate to yield N-formimidoyl-L-glutamate. It is the third step in the universal histidine degradation pathway. This is Imidazolonepropionase from Photobacterium profundum (strain SS9).